Consider the following 710-residue polypeptide: Lactoperoxidase (710 aa).

Residues 1-22 (MKVLLRLPALLASLTLLQMAAS) form the signal peptide. The propeptide occupies 23 to 98 (TRNATRTATI…WEQSLKRLRR (76 aa)). Asparagine 25, asparagine 104, and asparagine 131 each carry an N-linked (GlcNAc...) asparagine glycan. A disulfide bridge connects residues cysteine 130 and cysteine 143. Aspartate 223 is a heme b binding site. Histidine 224 (proton acceptor) is an active-site residue. A Ca(2+)-binding site is contributed by aspartate 225. A glycan (N-linked (GlcNAc...) asparagine) is linked at asparagine 238. 2 cysteine pairs are disulfide-bonded: cysteine 244/cysteine 254 and cysteine 248/cysteine 272. Ca(2+) contacts are provided by threonine 299, phenylalanine 301, aspartate 303, and serine 305. Serine 313 bears the Phosphoserine mark. Asparagine 320 is a glycosylation site (N-linked (GlcNAc...) asparagine). Residues cysteine 352 and cysteine 363 are joined by a disulfide bond. Positions 373 and 466 each coordinate heme b. At tyrosine 480 the chain carries 3'-nitrotyrosine. 2 cysteine pairs are disulfide-bonded: cysteine 571-cysteine 628 and cysteine 669-cysteine 694.

Belongs to the peroxidase family. XPO subfamily. Ca(2+) is required as a cofactor. Heme b serves as cofactor. Expressed in the lacrimal gland with higher levels and 3-fold higher activity in adult females than males and secreted into tears (at protein level).

It localises to the secreted. It is found in the cytoplasm. It carries out the reaction 2 a phenolic donor + H2O2 = 2 a phenolic radical donor + 2 H2O. The enzyme catalyses thiocyanate + H2O2 + H(+) = hypothiocyanous acid + H2O. The catalysed reaction is iodide + H2O2 = hypoiodite + H2O. Heme-containing oxidoreductase which catalyzes the conversion of thiocyanate (SCN(-)) into antimicrobial agent hypothiocyanous acid (OSCN(-)) in the presence of hydrogen peroxide (H2O2). Also involved in the conversion of iodide (I(-)) into hypoiodite (IO(-)) in the presence of H2O2. Responsible for the inactivation of a wide range of micro-organisms and hence, important component of defense mechanism. May be implicated in airway host defense against infection. May contribute to maintaining an appropriate H2O2 cellular level, therefore protecting cells from H2O2-caused injuries and inflammation. This Mesocricetus auratus (Golden hamster) protein is Lactoperoxidase (LPO).